Here is a 676-residue protein sequence, read N- to C-terminus: Probable LRR receptor-like serine/threonine-protein kinase At4g31250 (676 aa).

The signal sequence occupies residues 1–26; the sequence is MTRDDKFPIVYSLLLIVLLFVSPIYG. Residues 27–242 lie on the Extracellular side of the membrane; it reads DGDADALLKF…LLPCRYTRPP (216 aa). N-linked (GlcNAc...) asparagine glycans are attached at residues asparagine 42, asparagine 73, and asparagine 83. LRR repeat units lie at residues 98–122, 123–146, 148–171, 172–195, and 197–218; these read IRGLKSISFMRNHFEGKIPRGIDGL, VSLAHLYLAHNQFTGEIDGDLFSG, KALLKVHLEGNRFSGEIPESLGKL, PKLTELNLEDNMFTGKIPAFKQKN, and VTVNVANNQLEGRIPLTLGLMN. N-linked (GlcNAc...) asparagine glycosylation occurs at asparagine 218. Residues 243 to 263 traverse the membrane as a helical segment; sequence FFTVFLLALTILAVVVLITVF. Topologically, residues 264–676 are cytoplasmic; the sequence is LSVCILSRRQ…RAMTEEFSLM (413 aa). Residues 319-330 show a composition bias toward polar residues; sequence TVQRDSTATSGA. The segment at 319 to 347 is disordered; the sequence is TVQRDSTATSGAISVGGLSPDEDKRGDQR. In terms of domain architecture, Protein kinase spans 366–640; the sequence is RASAEVLGSG…HEAVDRIEEV (275 aa). Serine 368 is modified (phosphoserine). ATP contacts are provided by residues 372–380 and lysine 394; that span reads LGSGGFGSS. Serine 446 and serine 543 each carry phosphoserine. Residues 641–676 form a disordered region; it reads DRDAGGGQESVRSSYVTASDGDHRSSRAMTEEFSLM.

Belongs to the protein kinase superfamily. Ser/Thr protein kinase family.

It is found in the membrane. It catalyses the reaction L-seryl-[protein] + ATP = O-phospho-L-seryl-[protein] + ADP + H(+). It carries out the reaction L-threonyl-[protein] + ATP = O-phospho-L-threonyl-[protein] + ADP + H(+). The polypeptide is Probable LRR receptor-like serine/threonine-protein kinase At4g31250 (Arabidopsis thaliana (Mouse-ear cress)).